The chain runs to 969 residues: Isoleucine--tRNA ligase (969 aa).

The short motif at 70 to 80 (PYANGAIHIGH) is the 'HIGH' region element. Glutamate 601 lines the L-isoleucyl-5'-AMP pocket. The 'KMSKS' region motif lies at 642-646 (KMSKS). An ATP-binding site is contributed by lysine 645.

The protein belongs to the class-I aminoacyl-tRNA synthetase family. IleS type 1 subfamily. Monomer.

The protein resides in the cytoplasm. The catalysed reaction is tRNA(Ile) + L-isoleucine + ATP = L-isoleucyl-tRNA(Ile) + AMP + diphosphate. In terms of biological role, catalyzes the attachment of isoleucine to tRNA(Ile). As IleRS can inadvertently accommodate and process structurally similar amino acids such as valine, to avoid such errors it has two additional distinct tRNA(Ile)-dependent editing activities. One activity is designated as 'pretransfer' editing and involves the hydrolysis of activated Val-AMP. The other activity is designated 'posttransfer' editing and involves deacylation of mischarged Val-tRNA(Ile). The polypeptide is Isoleucine--tRNA ligase (Caulobacter vibrioides (strain ATCC 19089 / CIP 103742 / CB 15) (Caulobacter crescentus)).